The sequence spans 161 residues: uncharacterized protein (161 aa).

The segment at 126 to 161 is disordered; it reads TPSNCGESSTSSGQSSGDESNCSLRTHGVYTRGEQH. Residues 128 to 148 show a composition bias toward low complexity; that stretch reads SNCGESSTSSGQSSGDESNCS.

This sequence belongs to the herpesviridae US1 family.

This is an uncharacterized protein from Human cytomegalovirus (strain AD169) (HHV-5).